A 31-amino-acid polypeptide reads, in one-letter code: Cytochrome b6-f complex subunit 6 (31 aa).

The chain crosses the membrane as a helical span at residues 3–23 (AIVAYIGFLALFTGIAAGLLF).

It belongs to the PetL family. As to quaternary structure, the 4 large subunits of the cytochrome b6-f complex are cytochrome b6, subunit IV (17 kDa polypeptide, PetD), cytochrome f and the Rieske protein, while the 4 small subunits are PetG, PetL, PetM and PetN. The complex functions as a dimer.

It localises to the cellular thylakoid membrane. Functionally, component of the cytochrome b6-f complex, which mediates electron transfer between photosystem II (PSII) and photosystem I (PSI), cyclic electron flow around PSI, and state transitions. PetL is important for photoautotrophic growth as well as for electron transfer efficiency and stability of the cytochrome b6-f complex. The polypeptide is Cytochrome b6-f complex subunit 6 (Nostoc sp. (strain PCC 7120 / SAG 25.82 / UTEX 2576)).